The chain runs to 290 residues: Glycine--tRNA ligase alpha subunit (290 aa).

Belongs to the class-II aminoacyl-tRNA synthetase family. As to quaternary structure, tetramer of two alpha and two beta subunits.

It localises to the cytoplasm. It carries out the reaction tRNA(Gly) + glycine + ATP = glycyl-tRNA(Gly) + AMP + diphosphate. The polypeptide is Glycine--tRNA ligase alpha subunit (Maridesulfovibrio salexigens (strain ATCC 14822 / DSM 2638 / NCIMB 8403 / VKM B-1763) (Desulfovibrio salexigens)).